Reading from the N-terminus, the 308-residue chain is 4-hydroxy-3-methylbut-2-enyl diphosphate reductase (308 aa).

Cysteine 12 provides a ligand contact to [4Fe-4S] cluster. Residues histidine 43 and histidine 77 each coordinate (2E)-4-hydroxy-3-methylbut-2-enyl diphosphate. Positions 43 and 77 each coordinate dimethylallyl diphosphate. Residues histidine 43 and histidine 77 each coordinate isopentenyl diphosphate. Cysteine 99 serves as a coordination point for [4Fe-4S] cluster. Histidine 127 contributes to the (2E)-4-hydroxy-3-methylbut-2-enyl diphosphate binding site. A dimethylallyl diphosphate-binding site is contributed by histidine 127. Histidine 127 contributes to the isopentenyl diphosphate binding site. Residue glutamate 129 is the Proton donor of the active site. Threonine 167 serves as a coordination point for (2E)-4-hydroxy-3-methylbut-2-enyl diphosphate. Cysteine 197 lines the [4Fe-4S] cluster pocket. Residues serine 225, serine 226, asparagine 227, and serine 269 each coordinate (2E)-4-hydroxy-3-methylbut-2-enyl diphosphate. Positions 225, 226, 227, and 269 each coordinate dimethylallyl diphosphate. Isopentenyl diphosphate contacts are provided by serine 225, serine 226, asparagine 227, and serine 269.

It belongs to the IspH family. Requires [4Fe-4S] cluster as cofactor.

It catalyses the reaction isopentenyl diphosphate + 2 oxidized [2Fe-2S]-[ferredoxin] + H2O = (2E)-4-hydroxy-3-methylbut-2-enyl diphosphate + 2 reduced [2Fe-2S]-[ferredoxin] + 2 H(+). The catalysed reaction is dimethylallyl diphosphate + 2 oxidized [2Fe-2S]-[ferredoxin] + H2O = (2E)-4-hydroxy-3-methylbut-2-enyl diphosphate + 2 reduced [2Fe-2S]-[ferredoxin] + 2 H(+). The protein operates within isoprenoid biosynthesis; dimethylallyl diphosphate biosynthesis; dimethylallyl diphosphate from (2E)-4-hydroxy-3-methylbutenyl diphosphate: step 1/1. Its pathway is isoprenoid biosynthesis; isopentenyl diphosphate biosynthesis via DXP pathway; isopentenyl diphosphate from 1-deoxy-D-xylulose 5-phosphate: step 6/6. Its function is as follows. Catalyzes the conversion of 1-hydroxy-2-methyl-2-(E)-butenyl 4-diphosphate (HMBPP) into a mixture of isopentenyl diphosphate (IPP) and dimethylallyl diphosphate (DMAPP). Acts in the terminal step of the DOXP/MEP pathway for isoprenoid precursor biosynthesis. This is 4-hydroxy-3-methylbut-2-enyl diphosphate reductase from Wolbachia pipientis subsp. Culex pipiens (strain wPip).